A 154-amino-acid polypeptide reads, in one-letter code: Methylglyoxal synthase (154 aa).

The MGS-like domain maps to Gly6–Leu154. Substrate-binding positions include His19, Lys23, Thr45 to Thr48, and Ser65 to Gly66. Residue Asp71 is the Proton donor/acceptor of the active site. His98 is a binding site for substrate.

The protein belongs to the methylglyoxal synthase family.

The enzyme catalyses dihydroxyacetone phosphate = methylglyoxal + phosphate. In terms of biological role, catalyzes the formation of methylglyoxal from dihydroxyacetone phosphate. The sequence is that of Methylglyoxal synthase from Saccharophagus degradans (strain 2-40 / ATCC 43961 / DSM 17024).